The sequence spans 443 residues: Elongation factor 1-alpha (443 aa).

The region spanning 5 to 228 (KTHINLVVIG…DTMQPPKRPY (224 aa)) is the tr-type G domain. The segment at 14-21 (GHVDSGKS) is G1. 14–21 (GHVDSGKS) is a GTP binding site. Positions 70–74 (GITID) are G2. The interval 91–94 (DAPG) is G3. GTP-binding positions include 91-95 (DAPGH) and 153-156 (NKMD). The interval 153 to 156 (NKMD) is G4. The tract at residues 192 to 194 (SGF) is G5.

The protein belongs to the TRAFAC class translation factor GTPase superfamily. Classic translation factor GTPase family. EF-Tu/EF-1A subfamily.

The protein localises to the cytoplasm. Functionally, this protein promotes the GTP-dependent binding of aminoacyl-tRNA to the A-site of ribosomes during protein biosynthesis. This is Elongation factor 1-alpha (MEF-1) from Plasmodium falciparum (isolate K1 / Thailand).